A 277-amino-acid polypeptide reads, in one-letter code: Protein PTST, chloroplastic (277 aa).

The transit peptide at 1–44 (MGCVPRIEFGCSSQSLTLSWNLRAWNLCRLNTISHFQKLPYPLV) directs the protein to the chloroplast. Residues 95–152 (DTERSKLVKKLSEANQQNRFLKRQLKTQEHEITNIKTELALMELEVQALVKLAEEIAN) adopt a coiled-coil conformation.

Interacts with GBSS1.

It is found in the plastid. It localises to the chloroplast stroma. Involved in targeting GBSS1 to the starch granule. Was originally thought to be a carbohydrate-binding scaffold protein, but it has been shown that it is mainly found as a soluble protein and that interaction with GBSS1 is a pre-requisite for subsequent starch granule binding. Dissociation from starch as a function of pH, Mg(2+) concentration or redox state is not observed. Interacts primarily with amylopectin and is required for amylose synthesis. This is Protein PTST, chloroplastic from Arabidopsis thaliana (Mouse-ear cress).